Reading from the N-terminus, the 202-residue chain is Apolipoprotein R (202 aa).

The first 28 residues, 1–28 (MPPNLQRIFPALCLLGVLFLLHCTPVLC), serve as a signal peptide directing secretion. 2 Sushi domains span residues 29–87 (GCDN…QCKA) and 88–145 (LCPK…KCEW). 4 disulfide bridges follow: Cys-30–Cys-73, Cys-59–Cys-85, Cys-89–Cys-130, and Cys-116–Cys-143.

Forms high molecular weight disulfide-linked complexes. As to expression, plasma. Found on very low-density lipoprotein (VLDL), on chylomicrons, and in the D &gt; 1.21 g/ml fraction of pig plasma. Found in liver, spleen, lung, bone marrow and lymph node.

It is found in the secreted. May be a lipoprotein-borne regulator of either the coagulation or the complement cascades. The chain is Apolipoprotein R (APOR) from Sus scrofa (Pig).